A 527-amino-acid polypeptide reads, in one-letter code: Amidophosphoribosyltransferase (527 aa).

Residues 1–30 (MAVDSDYVTDRAAGSRQTVTGQQPEQDLNS) are disordered. A propeptide spanning residues 1–34 (MAVDSDYVTDRAAGSRQTVTGQQPEQDLNSPREE) is cleaved from the precursor. The segment covering 15-29 (SRQTVTGQQPEQDLN) has biased composition (polar residues). Residue C35 is the Nucleophile of the active site. A Glutamine amidotransferase type-2 domain is found at 35-261 (CGVFGVWAPG…PGELLAIDAD (227 aa)). C276 contributes to the [4Fe-4S] cluster binding site. The Mg(2+) site is built by S323, D385, and D386. [4Fe-4S] cluster-binding residues include C422, C478, and C481.

The protein in the C-terminal section; belongs to the purine/pyrimidine phosphoribosyltransferase family. It depends on Mg(2+) as a cofactor. [4Fe-4S] cluster serves as cofactor.

The catalysed reaction is 5-phospho-beta-D-ribosylamine + L-glutamate + diphosphate = 5-phospho-alpha-D-ribose 1-diphosphate + L-glutamine + H2O. It functions in the pathway purine metabolism; IMP biosynthesis via de novo pathway; N(1)-(5-phospho-D-ribosyl)glycinamide from 5-phospho-alpha-D-ribose 1-diphosphate: step 1/2. Functionally, catalyzes the formation of phosphoribosylamine from phosphoribosylpyrophosphate (PRPP) and glutamine. The protein is Amidophosphoribosyltransferase of Mycobacterium bovis (strain ATCC BAA-935 / AF2122/97).